A 495-amino-acid chain; its full sequence is Potassium voltage-gated channel subfamily A member 1 (495 aa).

Positions 1–30 (MTVMSGENADEASAAPGHPQDGSYPRQADH) are disordered. Positions 1-128 (MTVMSGENAD…FYELGEEAME (128 aa)) are tetramerization domain. Topologically, residues 1-164 (MTVMSGENAD…LLFEYPESSG (164 aa)) are cytoplasmic. Ser23 is modified (phosphoserine). A helical transmembrane segment spans residues 165 to 186 (PARVIAIVSVMVILISIVIFCL). At 187–220 (ETLPELKDDKDFTGTIHRIDNTTVIYTSNIFTDP) the chain is on the extracellular side. N-linked (GlcNAc...) asparagine glycosylation occurs at Asn207. Residues 221-242 (FFIVETLCIIWFSFELVVRFFA) traverse the membrane as a helical segment. Cys243 is lipidated: S-palmitoyl cysteine. The Cytoplasmic segment spans residues 243–253 (CPSKTDFFKNI). A helical transmembrane segment spans residues 254-274 (MNFIDIVAIIPYFITLGTEIA). The Extracellular segment spans residues 275-287 (EQEGNQKGEQATS). The helical; Voltage-sensor transmembrane segment at 288 to 308 (LAILRVIRLVRVFRIFKLSRH) threads the bilayer. The Cytoplasmic segment spans residues 309–323 (SKGLQILGQTLKASM). An S4-S5 linker region spans residues 310 to 323 (KGLQILGQTLKASM). Residue Ser322 is modified to Phosphoserine; by PKA. Residues 324–345 (RELGLLIFFLFIGVILFSSAVY) traverse the membrane as a helical segment. Over 346 to 359 (FAEAEEAESHFSSI) the chain is Extracellular. The helical intramembrane region spans 360–371 (PDAFWWAVVSMT). The Selectivity filter motif lies at 372–377 (TVGYGD). An intramembrane segment occupies 372–379 (TVGYGDMY). Topologically, residues 380–386 (PVTIGGK) are extracellular. The chain crosses the membrane as a helical span at residues 387–415 (IVGSLCAIAGVLTIALPVPVIVSNFNYFY). Residues 416–495 (HRETEGEEQA…VNKSKLLTDV (80 aa)) lie on the Cytoplasmic side of the membrane. Ser437 and Ser439 each carry phosphoserine. Ser446 bears the Phosphoserine; by PKA mark. Residues 493–495 (TDV) carry the PDZ-binding motif.

This sequence belongs to the potassium channel family. A (Shaker) (TC 1.A.1.2) subfamily. Kv1.1/KCNA1 sub-subfamily. Homotetramer and heterotetramer with other channel-forming alpha subunits, such as KCNA2, KCNA4, KCNA5, KCNA6 and KCNA7. Channel activity is regulated by interaction with the beta subunits KCNAB1 and KCNAB2. Identified in a complex with KCNA2 and KCNAB2. Interacts (via C-terminus) with the PDZ domains of DLG1, DLG2 and DLG4. Interacts with LGI1 within a complex containing LGI1, KCNA4 and KCNAB1. Interacts (via cytoplasmic N-terminal domain) with KCNRG; this inhibits channel activity. Interacts with ANK3; this inhibits channel activity. Interacts (via N-terminus) with STX1A; this promotes channel inactivation. Interacts (via N-terminus) with the heterodimer formed by GNB1 and GNG2; this promotes channel inactivation. Can interact simultaneously with STX1A and the heterodimer formed by GNB1 and GNG2. Interacts with ADAM11. Palmitoylated on Cys-243; which may be required for membrane targeting. Post-translationally, N-glycosylated. In terms of processing, phosphorylated on tyrosine residues. Phosphorylation increases in response to NRG1; this inhibits channel activity. Phosphorylated by PKA. Phosphorylation at Ser-446 regulates channel activity by down-regulating expression at the cell membrane. As to expression, detected in hippocampus, in the middle third of the molecular layer of the dentate gyrus and in stratum radiatum and stratum oriens. Detected in the mossy fiber zone in the hippocampus CA3 region, at or near axon terminals. Detected in brain cortex, at basket cell terminals. Detected adjacent to nodes of Ranvier in juxtaparanodal zones in spinal cord nerve fibers, but also in paranodal regions in some myelinated spinal cord axons. Detected in juxtaparanodal regions adjacent to the nodes of Ranvier in myelinated axons in cerebellar white matter. Detected in sensory neurons. Detected in neurons from the medial nucleus of the trapezoid body. Detected in basolateral amygdala. Detected in the paraventricular nucleus of the hypothalamus. Detected in the islet of Langerhans (at protein level).

It localises to the cell membrane. The protein resides in the membrane. It is found in the cell projection. Its subcellular location is the axon. The protein localises to the cytoplasmic vesicle. It localises to the perikaryon. The protein resides in the endoplasmic reticulum. It is found in the dendrite. Its subcellular location is the cell junction. The protein localises to the synapse. It localises to the presynapse. The protein resides in the presynaptic cell membrane. The enzyme catalyses K(+)(in) = K(+)(out). Its activity is regulated as follows. Inhibited by 4-aminopyridine (4-AP) and by tetraethylammonium (TEA). Inhibited by kaliotoxin (KTX). In terms of biological role, voltage-gated potassium channel that mediates transmembrane potassium transport in excitable membranes, primarily in the brain and the central nervous system, but also in the kidney. Contributes to the regulation of the membrane potential and nerve signaling, and prevents neuronal hyperexcitability. Forms tetrameric potassium-selective channels through which potassium ions pass in accordance with their electrochemical gradient. The channel alternates between opened and closed conformations in response to the voltage difference across the membrane. Can form functional homotetrameric channels and heterotetrameric channels that contain variable proportions of KCNA1, KCNA2, KCNA4, KCNA5, KCNA6, KCNA7, and possibly other family members as well; channel properties depend on the type of alpha subunits that are part of the channel. Channel properties are modulated by cytoplasmic beta subunits that regulate the subcellular location of the alpha subunits and promote rapid inactivation of delayed rectifier potassium channels. In vivo, membranes probably contain a mixture of heteromeric potassium channel complexes, making it difficult to assign currents observed in intact tissues to any particular potassium channel family member. Homotetrameric KCNA1 forms a delayed-rectifier potassium channel that opens in response to membrane depolarization, followed by slow spontaneous channel closure. In contrast, a heterotetrameric channel formed by KCNA1 and KCNA4 shows rapid inactivation. Regulates neuronal excitability in hippocampus, especially in mossy fibers and medial perforant path axons, preventing neuronal hyperexcitability. Response to toxins that are selective for KCNA1, respectively for KCNA2, suggests that heteromeric potassium channels composed of both KCNA1 and KCNA2 play a role in pacemaking and regulate the output of deep cerebellar nuclear neurons. May function as down-stream effector for G protein-coupled receptors and inhibit GABAergic inputs to basolateral amygdala neurons. May contribute to the regulation of neurotransmitter release, such as gamma-aminobutyric acid (GABA) release. Plays a role in regulating the generation of action potentials and preventing hyperexcitability in myelinated axons of the vagus nerve, and thereby contributes to the regulation of heart contraction. Required for normal neuromuscular responses. Regulates the frequency of neuronal action potential firing in response to mechanical stimuli, and plays a role in the perception of pain caused by mechanical stimuli, but does not play a role in the perception of pain due to heat stimuli. Required for normal responses to auditory stimuli and precise location of sound sources, but not for sound perception. The use of toxins that block specific channels suggest that it contributes to the regulation of the axonal release of the neurotransmitter dopamine. Required for normal postnatal brain development and normal proliferation of neuronal precursor cells in the brain. Plays a role in the reabsorption of Mg(2+) in the distal convoluted tubules in the kidney and in magnesium ion homeostasis, probably via its effect on the membrane potential. The protein is Potassium voltage-gated channel subfamily A member 1 of Rattus norvegicus (Rat).